The following is a 350-amino-acid chain: Phenylalanine--tRNA ligase alpha subunit (350 aa).

Glu-257 contacts Mg(2+).

This sequence belongs to the class-II aminoacyl-tRNA synthetase family. Phe-tRNA synthetase alpha subunit type 1 subfamily. Tetramer of two alpha and two beta subunits. Mg(2+) serves as cofactor.

It localises to the cytoplasm. It catalyses the reaction tRNA(Phe) + L-phenylalanine + ATP = L-phenylalanyl-tRNA(Phe) + AMP + diphosphate + H(+). The sequence is that of Phenylalanine--tRNA ligase alpha subunit from Listeria welshimeri serovar 6b (strain ATCC 35897 / DSM 20650 / CCUG 15529 / CIP 8149 / NCTC 11857 / SLCC 5334 / V8).